The primary structure comprises 317 residues: MGEVQREKVAVIIGPTAVGKTKLSIDLAKALNGEIVSGDSMQIYRTMDIGTAKVTTDEMDGIPHYMIDIKDPEDSFSVAEFQESVRKCIREITERGKLPIIVGGTGLYIQSVLFDYQFTDEAGDATYREQMEKLALEHGVEYVHKKLQEVDPESAERIHANNVRRVIRALEIFHTTGEKMSNQLEKQENELLYDVSLIGLTMDREMLYDRINLRVNLMIEQGLLEEVKGLHERGVRDCQSIQAIGYKEIYDYFENRVSLEEAVSQLKTNSRRYAKRQLTWFRNKMDVGWFDVTDGEKTSEILRYIEGKLQLKSNNSK.

Position 14-21 (Gly14–Thr21) interacts with ATP. Position 16-21 (Thr16–Thr21) interacts with substrate. Residues Asp39–Gln42 are interaction with substrate tRNA.

This sequence belongs to the IPP transferase family. As to quaternary structure, monomer. The cofactor is Mg(2+).

The catalysed reaction is adenosine(37) in tRNA + dimethylallyl diphosphate = N(6)-dimethylallyladenosine(37) in tRNA + diphosphate. In terms of biological role, catalyzes the transfer of a dimethylallyl group onto the adenine at position 37 in tRNAs that read codons beginning with uridine, leading to the formation of N6-(dimethylallyl)adenosine (i(6)A). This Bacillus mycoides (strain KBAB4) (Bacillus weihenstephanensis) protein is tRNA dimethylallyltransferase.